The chain runs to 315 residues: Ferrochelatase (315 aa).

Positions 193 and 273 each coordinate Fe cation.

The protein belongs to the ferrochelatase family.

The protein localises to the cytoplasm. The enzyme catalyses heme b + 2 H(+) = protoporphyrin IX + Fe(2+). The protein operates within porphyrin-containing compound metabolism; protoheme biosynthesis; protoheme from protoporphyrin-IX: step 1/1. Catalyzes the ferrous insertion into protoporphyrin IX. The polypeptide is Ferrochelatase (Wolbachia sp. subsp. Drosophila simulans (strain wRi)).